The sequence spans 469 residues: Phosphoenolpyruvate carboxylase (469 aa).

Belongs to the PEPCase type 2 family. As to quaternary structure, homotetramer. Mg(2+) serves as cofactor.

It catalyses the reaction oxaloacetate + phosphate = phosphoenolpyruvate + hydrogencarbonate. Its function is as follows. Catalyzes the irreversible beta-carboxylation of phosphoenolpyruvate (PEP) to form oxaloacetate (OAA), a four-carbon dicarboxylic acid source for the tricarboxylic acid cycle. The protein is Phosphoenolpyruvate carboxylase of Pyrococcus abyssi (strain GE5 / Orsay).